The sequence spans 238 residues: Chromosome partition protein MukE (238 aa).

This sequence belongs to the MukE family. As to quaternary structure, interacts, and probably forms a ternary complex, with MukF and MukB. The complex formation is stimulated by calcium or magnesium.

The protein resides in the cytoplasm. Its subcellular location is the nucleoid. Its function is as follows. Involved in chromosome condensation, segregation and cell cycle progression. May participate in facilitating chromosome segregation by condensation DNA from both sides of a centrally located replisome during cell division. Probably acts via its interaction with MukB and MukF. The protein is Chromosome partition protein MukE of Haemophilus ducreyi (strain 35000HP / ATCC 700724).